We begin with the raw amino-acid sequence, 434 residues long: Trigger factor (434 aa).

The 86-residue stretch at 161-246 folds into the PPIase FKBP-type domain; sequence EDRVVIDFTG…VKQVQAPVLP (86 aa).

The protein belongs to the FKBP-type PPIase family. Tig subfamily.

The protein resides in the cytoplasm. The enzyme catalyses [protein]-peptidylproline (omega=180) = [protein]-peptidylproline (omega=0). Involved in protein export. Acts as a chaperone by maintaining the newly synthesized protein in an open conformation. Functions as a peptidyl-prolyl cis-trans isomerase. In Dechloromonas aromatica (strain RCB), this protein is Trigger factor.